Reading from the N-terminus, the 444-residue chain is MISKTLYQKIYDSHIVYQDKNGGAILYIDLHLLHEVTSPQAFDALRSKKREVRQSKKTFATMDHNVSTTIQNISASGSMARKQMEQLIKNCQEFNIPLYDINNPNQGIVHVIAPEKGMTLPGMTIVCGDSHTSTHGAFGALAFGIGTSEVEHVLATQTLKQKRFKNMKIEIIGKIPKFVTAKDIILFVIGQLGSSSGTGYVIEFCGNIIKNMSMEERMTVCNMAIEMXAKSGLIAPXXITYKYLKDKIYSPSGLFWEKSLDYWKCLKSDKNAYFDKCITVDISNLAPQITWGTNPDQVISIDEKIPDYNNINSEVKKDSAKSACKYMGLKSNTYLTNISIDKVFIGSXTNARIEDLRSAAKILQNRKIAKHVKAIVVPGSGLVKKKAEQEGLDKIFIDSGFEWRLPGCSMXLGMNKDRLNFGERXXSHSNRNFEGRQGRGGRTH.

3 residues coordinate [4Fe-4S] cluster: residue 348, cysteine 408, and residue 411. Positions 423–444 (ERXXSHSNRNFEGRQGRGGRTH) are disordered.

Belongs to the aconitase/IPM isomerase family. LeuC type 1 subfamily. Heterodimer of LeuC and LeuD. Requires [4Fe-4S] cluster as cofactor.

The catalysed reaction is (2R,3S)-3-isopropylmalate = (2S)-2-isopropylmalate. Its pathway is amino-acid biosynthesis; L-leucine biosynthesis; L-leucine from 3-methyl-2-oxobutanoate: step 2/4. Catalyzes the isomerization between 2-isopropylmalate and 3-isopropylmalate, via the formation of 2-isopropylmaleate. The sequence is that of 3-isopropylmalate dehydratase large subunit from Buchnera aphidicola subsp. Uroleucon rudbeckiae.